The primary structure comprises 497 residues: ATP-dependent RNA helicase CshA (497 aa).

The short motif at 1–29 (MKFSELGLSDSLLKAIKRSGYEEATPIQE) is the Q motif element. Residues 32 to 202 (IPMVLEGKDV…VQFMSDPETV (171 aa)) enclose the Helicase ATP-binding domain. ATP is bound at residue 45–52 (AQTGTGKT). Residues 150–153 (DEAD) carry the DEAD box motif. Residues 228–373 (DIMTRLIDVQ…PLKPPTAEEA (146 aa)) enclose the Helicase C-terminal domain. The disordered stretch occupies residues 425-497 (AASEVPVKIT…SFNIRHRKEN (73 aa)). The span at 448–458 (RNGNRNNSHGG) shows a compositional bias: low complexity. Basic residues-rich tracts occupy residues 459–473 (NHYR…QHGS) and 481–497 (KSHS…RKEN).

Belongs to the DEAD box helicase family. CshA subfamily. In terms of assembly, oligomerizes, may be a member of the RNA degradosome.

The protein resides in the cytoplasm. It localises to the cell membrane. The catalysed reaction is ATP + H2O = ADP + phosphate + H(+). In terms of biological role, DEAD-box RNA helicase possibly involved in RNA degradation. Unwinds dsRNA in both 5'- and 3'-directions, has RNA-dependent ATPase activity. Over-expression leads to cell aggregation. The polypeptide is ATP-dependent RNA helicase CshA (Limosilactobacillus reuteri (Lactobacillus reuteri)).